The chain runs to 471 residues: Glutamate--tRNA ligase (471 aa).

Positions Pro10–Gly20 match the 'HIGH' region motif. Residues Gly117–Asp137 form a disordered region. The short motif at Lys239 to Arg243 is the 'KMSKS' region element. ATP is bound at residue Lys242.

The protein belongs to the class-I aminoacyl-tRNA synthetase family. Glutamate--tRNA ligase type 1 subfamily. Monomer.

It is found in the cytoplasm. The enzyme catalyses tRNA(Glu) + L-glutamate + ATP = L-glutamyl-tRNA(Glu) + AMP + diphosphate. Its function is as follows. Catalyzes the attachment of glutamate to tRNA(Glu) in a two-step reaction: glutamate is first activated by ATP to form Glu-AMP and then transferred to the acceptor end of tRNA(Glu). This Azorhizobium caulinodans (strain ATCC 43989 / DSM 5975 / JCM 20966 / LMG 6465 / NBRC 14845 / NCIMB 13405 / ORS 571) protein is Glutamate--tRNA ligase.